We begin with the raw amino-acid sequence, 226 residues long: Ribonuclease 3 (226 aa).

Positions 2–129 (IETISKTIKY…LIGAIYLDGG (128 aa)) constitute an RNase III domain. Glu42 is a Mg(2+) binding site. Residue Asp46 is part of the active site. 2 residues coordinate Mg(2+): Asn115 and Glu118. The active site involves Glu118. A DRBM domain is found at 154-223 (DAKTILQEFI…ASLMLNQIKD (70 aa)).

The protein belongs to the ribonuclease III family. Homodimer. It depends on Mg(2+) as a cofactor.

Its subcellular location is the cytoplasm. It catalyses the reaction Endonucleolytic cleavage to 5'-phosphomonoester.. Functionally, digests double-stranded RNA. Involved in the processing of primary rRNA transcript to yield the immediate precursors to the large and small rRNAs (23S and 16S). Processes some mRNAs, and tRNAs when they are encoded in the rRNA operon. Processes pre-crRNA and tracrRNA of type II CRISPR loci if present in the organism. The polypeptide is Ribonuclease 3 (Ehrlichia canis (strain Jake)).